The primary structure comprises 62 residues: Photosystem II reaction center protein Z (62 aa).

2 helical membrane passes run 8 to 28 and 41 to 61; these read ALAA…VAYA and FVGS…NFFV.

It belongs to the PsbZ family. As to quaternary structure, PSII is composed of 1 copy each of membrane proteins PsbA, PsbB, PsbC, PsbD, PsbE, PsbF, PsbH, PsbI, PsbJ, PsbK, PsbL, PsbM, PsbT, PsbX, PsbY, PsbZ, Psb30/Ycf12, peripheral proteins PsbO, CyanoQ (PsbQ), PsbU, PsbV and a large number of cofactors. It forms dimeric complexes.

It localises to the cellular thylakoid membrane. May control the interaction of photosystem II (PSII) cores with the light-harvesting antenna, regulates electron flow through the 2 photosystem reaction centers. PSII is a light-driven water plastoquinone oxidoreductase, using light energy to abstract electrons from H(2)O, generating a proton gradient subsequently used for ATP formation. The sequence is that of Photosystem II reaction center protein Z from Picosynechococcus sp. (strain ATCC 27264 / PCC 7002 / PR-6) (Agmenellum quadruplicatum).